We begin with the raw amino-acid sequence, 154 residues long: Myoglobin (154 aa).

The 147-residue stretch at 2-148 (GLSDGEWQLV…FRNDMAAKYK (147 aa)) folds into the Globin domain. At serine 4 the chain carries Phosphoserine. Position 65 (histidine 65) interacts with nitrite. Histidine 65 is a binding site for O2. Threonine 68 carries the post-translational modification Phosphothreonine. Residue histidine 94 participates in heme b binding.

The protein belongs to the globin family. As to quaternary structure, monomeric.

It localises to the cytoplasm. Its subcellular location is the sarcoplasm. The enzyme catalyses Fe(III)-heme b-[protein] + nitric oxide + H2O = Fe(II)-heme b-[protein] + nitrite + 2 H(+). It catalyses the reaction H2O2 + AH2 = A + 2 H2O. Monomeric heme protein which primary function is to store oxygen and facilitate its diffusion within muscle tissues. Reversibly binds oxygen through a pentacoordinated heme iron and enables its timely and efficient release as needed during periods of heightened demand. Depending on the oxidative conditions of tissues and cells, and in addition to its ability to bind oxygen, it also has a nitrite reductase activity whereby it regulates the production of bioactive nitric oxide. Under stress conditions, like hypoxia and anoxia, it also protects cells against reactive oxygen species thanks to its pseudoperoxidase activity. This is Myoglobin (MB) from Ochotona princeps (Southern American pika).